A 540-amino-acid chain; its full sequence is Membrane protein insertase YidC (540 aa).

5 helical membrane-spanning segments follow: residues 7 to 27 (LLVL…QMDY), 345 to 365 (IVSN…GILY), 415 to 435 (LGGC…YWTF), 453 to 473 (LSAQ…MFLL), and 494 to 514 (PLIF…YWLV).

It belongs to the OXA1/ALB3/YidC family. Type 1 subfamily. As to quaternary structure, interacts with the Sec translocase complex via SecD. Specifically interacts with transmembrane segments of nascent integral membrane proteins during membrane integration.

It localises to the cell inner membrane. Required for the insertion and/or proper folding and/or complex formation of integral membrane proteins into the membrane. Involved in integration of membrane proteins that insert both dependently and independently of the Sec translocase complex, as well as at least some lipoproteins. Aids folding of multispanning membrane proteins. The chain is Membrane protein insertase YidC from Mannheimia succiniciproducens (strain KCTC 0769BP / MBEL55E).